The sequence spans 557 residues: Acetylcholine receptor subunit alpha-L1 (557 aa).

The N-terminal stretch at 1-23 is a signal peptide; sequence MAAALPPMLLLLLLLLLHHPAAA. The Extracellular portion of the chain corresponds to 24-244; that stretch reads NPDAKRLYDD…NITLRRKTLF (221 aa). Asparagine 47 carries an N-linked (GlcNAc...) asparagine glycan. Intrachain disulfides connect cysteine 151/cysteine 165 and cysteine 224/cysteine 225. N-linked (GlcNAc...) asparagine glycosylation is present at asparagine 235. 3 consecutive transmembrane segments (helical) span residues 245–266, 274–294, and 308–329; these read YTVNLIVPCVGISYLSVLVFYL, IALCISILLSQTMFFLLISEI, and YLLFTMVLVGLSVVITIMVLNV. Topologically, residues 330-500 are cytoplasmic; it reads HYRKPSTHKM…EFDAEDQDWG (171 aa). The helical transmembrane segment at 501 to 523 threads the bilayer; the sequence is FVAMVLDRLFLWIFTIASIVGTF.

Belongs to the ligand-gated ion channel (TC 1.A.9) family. Acetylcholine receptor (TC 1.A.9.1) subfamily.

The protein resides in the postsynaptic cell membrane. The protein localises to the cell membrane. After binding acetylcholine, the AChR responds by an extensive change in conformation that affects all subunits and leads to opening of an ion-conducting channel across the plasma membrane. The chain is Acetylcholine receptor subunit alpha-L1 from Schistocerca gregaria (Desert locust).